Here is a 466-residue protein sequence, read N- to C-terminus: Glutamate decarboxylase (466 aa).

K277 is modified (N6-(pyridoxal phosphate)lysine).

Belongs to the group II decarboxylase family. Requires pyridoxal 5'-phosphate as cofactor.

The catalysed reaction is L-glutamate + H(+) = 4-aminobutanoate + CO2. Converts internalized glutamate to GABA and increases the internal pH. Involved in glutamate-dependent acid resistance. This chain is Glutamate decarboxylase (gadB), found in Lactococcus lactis subsp. lactis (strain IL1403) (Streptococcus lactis).